Consider the following 469-residue polypeptide: MLCLCLYVPVIGEAQTEFQYFESKGLPAELKSIFKLSVFIPSQEFSTYRQWKQKIVQAGDKDLDGQLDFEEFVHYLQDHEKKLRLVFKSLDKKNDGRIDAQEIMQSLRDLGVKISEQQAEKILKSMDKNGTMTIDWNEWRDYHLLHPVENIPEIILYWKHSTIFDVGENLTVPDEFTVEERQTGMWWRHLVAGGGAGAVSRTCTAPLDRLKVLMQVHASRSNNMGIVGGFTQMIREGGARSLWRGNGINVLKIAPESAIKFMAYEQIKRLVGSDQETLRIHERLVAGSLAGAIAQSSIYPMEVLKTRMALRKTGQYSGMLDCARRILAREGVAAFYKGYVPNMLGIIPYAGIDLAVYETLKNAWLQHYAVNSADPGVFVLLACGTMSSTCGQLASYPLALVRTRMQAQASIEGAPEVTMSSLFKHILRTEGAFGLYRGLAPNFMKVIPAVSISYVVYENLKITLGVQSR.

The interval 1 to 165 (MLCLCLYVPV…LYWKHSTIFD (165 aa)) is regulatory N-terminal domain. The Mitochondrial intermembrane portion of the chain corresponds to 1–189 (MLCLCLYVPV…ERQTGMWWRH (189 aa)). 3 consecutive EF-hand domains span residues 47 to 80 (TYRQ…QDHE), 78 to 113 (DHEK…LGVK), and 114 to 149 (ISEQ…HPVE). Ca(2+)-binding residues include aspartate 60, aspartate 62, aspartate 64, glutamine 66, and glutamate 71. Residues 151–160 (IPEIILYWKH) form a linker region region. A C-terminal transmembrane transporter domain region spans residues 166-469 (VGENLTVPDE…LKITLGVQSR (304 aa)). Solcar repeat units follow at residues 184–270 (GMWW…IKRL), 278–363 (LRIH…LKNA), and 375–463 (PGVF…LKIT). Residues 190–207 (LVAGGGAGAVSRTCTAPL) form a helical membrane-spanning segment. Residues 208 to 244 (DRLKVLMQVHASRSNNMGIVGGFTQMIREGGARSLWR) are Mitochondrial matrix-facing. Residues 245–264 (GNGINVLKIAPESAIKFMAY) traverse the membrane as a helical segment. The Mitochondrial intermembrane portion of the chain corresponds to 265 to 287 (EQIKRLVGSDQETLRIHERLVAG). A helical transmembrane segment spans residues 288 to 301 (SLAGAIAQSSIYPM). The Mitochondrial matrix segment spans residues 302–337 (EVLKTRMALRKTGQYSGMLDCARRILAREGVAAFYK). Residues 338–357 (GYVPNMLGIIPYAGIDLAVY) form a helical membrane-spanning segment. Over 358 to 380 (ETLKNAWLQHYAVNSADPGVFVL) the chain is Mitochondrial intermembrane. Residues 381-398 (LACGTMSSTCGQLASYPL) traverse the membrane as a helical segment. The Mitochondrial matrix portion of the chain corresponds to 399-437 (ALVRTRMQAQASIEGAPEVTMSSLFKHILRTEGAFGLYR). A helical membrane pass occupies residues 438 to 457 (GLAPNFMKVIPAVSISYVVY). Residues 458 to 469 (ENLKITLGVQSR) are Mitochondrial intermembrane-facing.

It belongs to the mitochondrial carrier (TC 2.A.29) family. In terms of tissue distribution, widely expressed. Expressed in fetal and adult liver, skeletal muscle, testis, ovary, hippocampus and caudate nucleus. As to expression, expressed in all tissues tested. Expression is restricted to kidney and lung.

It localises to the mitochondrion inner membrane. The enzyme catalyses Mg(2+)(out) + phosphate(in) + ATP(out) = Mg(2+)(in) + phosphate(out) + ATP(in). Activated by an increase in cytosolic calcium levels that induce a conformational change of the N-terminal regulatory domain, uncapping the channel and allowing transport. Functionally, electroneutral antiporter that most probably mediates the transport of adenyl nucleotides through the inner mitochondrial membrane. Originally identified as an ATP-magnesium/inorganic phosphate antiporter, it could have a broader specificity for adenyl nucleotides. By regulating the mitochondrial matrix adenyl nucleotide pool could adapt to changing cellular energetic demands and indirectly regulate adenyl nucleotide-dependent metabolic pathways. In Homo sapiens (Human), this protein is Mitochondrial adenyl nucleotide antiporter SLC25A25.